We begin with the raw amino-acid sequence, 101 residues long: UPF0473 protein LAF_0524 (101 aa).

It belongs to the UPF0473 family.

The polypeptide is UPF0473 protein LAF_0524 (Limosilactobacillus fermentum (strain NBRC 3956 / LMG 18251) (Lactobacillus fermentum)).